The chain runs to 426 residues: Glutamate-1-semialdehyde 2,1-aminomutase (426 aa).

An N6-(pyridoxal phosphate)lysine modification is found at lysine 265.

This sequence belongs to the class-III pyridoxal-phosphate-dependent aminotransferase family. HemL subfamily. In terms of assembly, homodimer. Pyridoxal 5'-phosphate serves as cofactor.

The protein resides in the cytoplasm. The enzyme catalyses (S)-4-amino-5-oxopentanoate = 5-aminolevulinate. It functions in the pathway porphyrin-containing compound metabolism; protoporphyrin-IX biosynthesis; 5-aminolevulinate from L-glutamyl-tRNA(Glu): step 2/2. This chain is Glutamate-1-semialdehyde 2,1-aminomutase, found in Methylococcus capsulatus (strain ATCC 33009 / NCIMB 11132 / Bath).